The chain runs to 423 residues: MEKIFKILANLKFAIALLLLISITITFGSIIEQDQTLDYYKQNYPLTNPIGGFLTWKVINMFQLNHIYKNFWFISLLLSLGISLIACTFFQQFPGIKFSRRCYFSNNPRKTDFQTQLKTNLSRNIIYTIISEGYFVFQQKKNFYGTKGIIGRIAPVFVHLSIILILLGSIFASLGGFNSQELIGKGEIFHIQNVTSSGPLTKLSQQAIRVNDFWINYYPNNKIKQFYSNLSIINGDGQEVRSKTISVNKPLIYKDLTFYQTDWNLLGLRISHNNKNFQIPVIQTTQNLNKVWLTWLPLESNTSKNLSGETIIINNYKGTIYIYDNNGQLNKKIELSNFIENKNYKLIEFLSVTGIQIKSDPGILFIYFGFGFLMVSTILSYLSFSQVWLGIDYLEQNNIKLTVNAKTNRTKVLALTVRIQPFL.

3 helical membrane passes run 11–31, 70–90, and 153–173; these read LKFAIALLLLISITITFGSII, NFWFISLLLSLGISLIACTFF, and IAPVFVHLSIILILLGSIFAS.

Belongs to the Ccs1/CcsB family. May interact with CcsA.

It localises to the plastid. The protein resides in the chloroplast thylakoid membrane. Its function is as follows. Required during biogenesis of c-type cytochromes (cytochrome c6 and cytochrome f) at the step of heme attachment. In Heterosigma akashiwo (strain NIES-293 / 8280G21-1), this protein is Cytochrome c biogenesis protein Ccs1.